The primary structure comprises 125 residues: Calcitonin receptor-stimulating peptide 1 (125 aa).

Positions Met1–Ala25 are cleaved as a signal peptide. The propeptide occupies Ala26–Gln77. Cys81 and Cys86 form a disulfide bridge.

Belongs to the calcitonin family.

It localises to the secreted. Functionally, stimulates cAMP production in porcine kidney cell line LLC-PK1 via the calcitonin receptor (CT) but not via the CT-like (CL) receptor. The sequence is that of Calcitonin receptor-stimulating peptide 1 (CRSP1) from Bos taurus (Bovine).